The following is a 426-amino-acid chain: S-adenosylmethionine synthase (426 aa).

His-22 contacts ATP. Mg(2+) is bound at residue Asp-24. Glu-50 is a K(+) binding site. The L-methionine site is built by Glu-63 and Gln-106. The interval 106–116 is flexible loop; that stretch reads QSPDISQGVTA. Residues 181 to 183, 257 to 258, Asp-266, 272 to 273, Ala-289, and Lys-293 each bind ATP; these read DGK, KF, and RK. Residue Asp-266 participates in L-methionine binding. L-methionine is bound at residue Lys-297.

Belongs to the AdoMet synthase family. Homotetramer; dimer of dimers. It depends on Mg(2+) as a cofactor. The cofactor is K(+).

Its subcellular location is the cytoplasm. The enzyme catalyses L-methionine + ATP + H2O = S-adenosyl-L-methionine + phosphate + diphosphate. The protein operates within amino-acid biosynthesis; S-adenosyl-L-methionine biosynthesis; S-adenosyl-L-methionine from L-methionine: step 1/1. In terms of biological role, catalyzes the formation of S-adenosylmethionine (AdoMet) from methionine and ATP. The overall synthetic reaction is composed of two sequential steps, AdoMet formation and the subsequent tripolyphosphate hydrolysis which occurs prior to release of AdoMet from the enzyme. This chain is S-adenosylmethionine synthase, found in Synechocystis sp. (strain ATCC 27184 / PCC 6803 / Kazusa).